A 297-amino-acid chain; its full sequence is Probable endonuclease 4 (297 aa).

Residues histidine 68, histidine 109, glutamate 144, aspartate 178, histidine 181, histidine 213, aspartate 226, histidine 228, and glutamate 258 each contribute to the Zn(2+) site.

The protein belongs to the AP endonuclease 2 family. It depends on Zn(2+) as a cofactor.

It carries out the reaction Endonucleolytic cleavage to 5'-phosphooligonucleotide end-products.. Its function is as follows. Endonuclease IV plays a role in DNA repair. It cleaves phosphodiester bonds at apurinic or apyrimidinic (AP) sites, generating a 3'-hydroxyl group and a 5'-terminal sugar phosphate. The protein is Probable endonuclease 4 of Enterococcus faecalis (strain ATCC 700802 / V583).